The sequence spans 561 residues: DNA ligase B (561 aa).

K128 (N6-AMP-lysine intermediate) is an active-site residue.

This sequence belongs to the NAD-dependent DNA ligase family. LigB subfamily.

The enzyme catalyses NAD(+) + (deoxyribonucleotide)n-3'-hydroxyl + 5'-phospho-(deoxyribonucleotide)m = (deoxyribonucleotide)n+m + AMP + beta-nicotinamide D-nucleotide.. Functionally, catalyzes the formation of phosphodiester linkages between 5'-phosphoryl and 3'-hydroxyl groups in double-stranded DNA using NAD as a coenzyme and as the energy source for the reaction. The polypeptide is DNA ligase B (Pseudomonas syringae pv. syringae (strain B728a)).